The chain runs to 241 residues: Carboxy-S-adenosyl-L-methionine synthase 1 (241 aa).

S-adenosyl-L-methionine contacts are provided by residues Y37, 61-63 (GCS), N131, and R198.

Belongs to the class I-like SAM-binding methyltransferase superfamily. Cx-SAM synthase family. Homodimer.

It catalyses the reaction prephenate + S-adenosyl-L-methionine = carboxy-S-adenosyl-L-methionine + 3-phenylpyruvate + H2O. Its function is as follows. Catalyzes the conversion of S-adenosyl-L-methionine (SAM) to carboxy-S-adenosyl-L-methionine (Cx-SAM). The polypeptide is Carboxy-S-adenosyl-L-methionine synthase 1 (Yersinia pseudotuberculosis serotype IB (strain PB1/+)).